A 293-amino-acid chain; its full sequence is Ribosomal protein L11 methyltransferase (293 aa).

S-adenosyl-L-methionine-binding residues include T145, G166, D188, and N230.

The protein belongs to the methyltransferase superfamily. PrmA family.

Its subcellular location is the cytoplasm. The enzyme catalyses L-lysyl-[protein] + 3 S-adenosyl-L-methionine = N(6),N(6),N(6)-trimethyl-L-lysyl-[protein] + 3 S-adenosyl-L-homocysteine + 3 H(+). In terms of biological role, methylates ribosomal protein L11. This chain is Ribosomal protein L11 methyltransferase, found in Escherichia coli (strain SMS-3-5 / SECEC).